We begin with the raw amino-acid sequence, 487 residues long: MSTHYIAGQWLAGQGETLESLDPVGQGVVWSGRGADATQVDAAVCAAREAFPAWARRPLEQRIELLERFAATLKSRADELARVIGEETGKPLWESATEVTSMVNKVAISVQAFRERTGEKSGPLADATAVLRHKPHGVVAVFGPYNFPGHLPNGHIVPALLAGNCVVFKPSELTPKVAELTLKAWIQAGLPAGVLNLVQGGRETGVALAAHRGLDGLFFTGSSRTGNLLHSQFGGQPQKILALEMGGNNPLVVEEVADLDAAVYTIIQSAFISAGQRCTCARRLLVPQGAWGDALLARLVAVSATLRVGRFDEQPAPFMGAVISLSAAEHLLKAQEHLIGKGAQPLLAMTQPIDGAALLTPGILDVSAVAERPDEEFFGPLLQVIRYSDFAAAIREANATQYGLAAGLLSDSRERFEQFLVESRAGIVNWNKQLTGAASSAPFGGIGASGNHRPSAYYAADYCAYPVASLESPSVSLPATLTPGISL.

NAD(+) is bound at residue 221–226; the sequence is GSSRTG. Residues Glu244 and Cys278 contribute to the active site.

It belongs to the aldehyde dehydrogenase family. AstD subfamily.

The enzyme catalyses N-succinyl-L-glutamate 5-semialdehyde + NAD(+) + H2O = N-succinyl-L-glutamate + NADH + 2 H(+). Its pathway is amino-acid degradation; L-arginine degradation via AST pathway; L-glutamate and succinate from L-arginine: step 4/5. In terms of biological role, catalyzes the NAD-dependent reduction of succinylglutamate semialdehyde into succinylglutamate. This Pseudomonas aeruginosa (strain ATCC 15692 / DSM 22644 / CIP 104116 / JCM 14847 / LMG 12228 / 1C / PRS 101 / PAO1) protein is N-succinylglutamate 5-semialdehyde dehydrogenase (astD).